The following is a 114-amino-acid chain: Non-specific lipid-transfer protein 2 (114 aa).

The first 23 residues, 1–23, serve as a signal peptide directing secretion; that stretch reads MEMVNKIACFVLLCMVVVAPHAE. 4 disulfide bridges follow: cysteine 27/cysteine 73, cysteine 37/cysteine 50, cysteine 51/cysteine 96, and cysteine 71/cysteine 110.

This sequence belongs to the plant LTP family.

In terms of biological role, plant non-specific lipid-transfer proteins transfer phospholipids as well as galactolipids across membranes. May play a role in wax or cutin deposition in the cell walls of expanding epidermal cells and certain secretory tissues. The chain is Non-specific lipid-transfer protein 2 from Solanum chilense (Tomato).